The following is a 297-amino-acid chain: GTPase Era (297 aa).

Residues 7–174 (RSGFVSIIGR…VEVVHGFIPA (168 aa)) form the Era-type G domain. The interval 15–22 (GRPNVGKS) is G1. GTP is bound at residue 15 to 22 (GRPNVGKS). Residues 41–45 (QTTRN) form a G2 region. Residues 62–65 (DTPG) are G3. GTP-binding positions include 62-66 (DTPGI) and 124-127 (NKID). The tract at residues 124-127 (NKID) is G4. A G5 region spans residues 153-155 (VSA). The region spanning 205 to 282 (THDEVPYSVA…FLELFVRVSK (78 aa)) is the KH type-2 domain.

The protein belongs to the TRAFAC class TrmE-Era-EngA-EngB-Septin-like GTPase superfamily. Era GTPase family. Monomer.

It is found in the cytoplasm. The protein resides in the cell inner membrane. An essential GTPase that binds both GDP and GTP, with rapid nucleotide exchange. Plays a role in 16S rRNA processing and 30S ribosomal subunit biogenesis and possibly also in cell cycle regulation and energy metabolism. This Geotalea uraniireducens (strain Rf4) (Geobacter uraniireducens) protein is GTPase Era.